The chain runs to 343 residues: Probable dual-specificity RNA methyltransferase RlmN (343 aa).

Glutamate 91 serves as the catalytic Proton acceptor. Residues 97-326 enclose the Radical SAM core domain; the sequence is HPGRITACIS…AEIRQEKGSD (230 aa). An intrachain disulfide couples cysteine 104 to cysteine 331. Residues cysteine 111, cysteine 115, and cysteine 118 each contribute to the [4Fe-4S] cluster site. S-adenosyl-L-methionine-binding positions include 158–159, serine 190, 213–215, and asparagine 289; these read GE and SLH. The active-site S-methylcysteine intermediate is cysteine 331.

This sequence belongs to the radical SAM superfamily. RlmN family. It depends on [4Fe-4S] cluster as a cofactor.

Its subcellular location is the cytoplasm. It catalyses the reaction adenosine(2503) in 23S rRNA + 2 reduced [2Fe-2S]-[ferredoxin] + 2 S-adenosyl-L-methionine = 2-methyladenosine(2503) in 23S rRNA + 5'-deoxyadenosine + L-methionine + 2 oxidized [2Fe-2S]-[ferredoxin] + S-adenosyl-L-homocysteine. The catalysed reaction is adenosine(37) in tRNA + 2 reduced [2Fe-2S]-[ferredoxin] + 2 S-adenosyl-L-methionine = 2-methyladenosine(37) in tRNA + 5'-deoxyadenosine + L-methionine + 2 oxidized [2Fe-2S]-[ferredoxin] + S-adenosyl-L-homocysteine. Its function is as follows. Specifically methylates position 2 of adenine 2503 in 23S rRNA and position 2 of adenine 37 in tRNAs. The chain is Probable dual-specificity RNA methyltransferase RlmN from Thermotoga neapolitana (strain ATCC 49049 / DSM 4359 / NBRC 107923 / NS-E).